The following is a 309-amino-acid chain: Beta-lactamase (309 aa).

An N-terminal signal peptide occupies residues Met-1 to Ala-28. Ser-92 serves as the catalytic Acyl-ester intermediate. Residue Glu-188 is the Proton acceptor of the active site. A substrate-binding site is contributed by Lys-254–Gly-256.

Belongs to the class-A beta-lactamase family.

It catalyses the reaction a beta-lactam + H2O = a substituted beta-amino acid. This protein is a beta-lactamase with a substrate specificity for penicillins. The chain is Beta-lactamase (bla) from Bacillus thuringiensis.